The chain runs to 283 residues: Elongation factor Ts (283 aa).

The involved in Mg(2+) ion dislocation from EF-Tu stretch occupies residues T80 to V83.

The protein belongs to the EF-Ts family.

Its subcellular location is the cytoplasm. Functionally, associates with the EF-Tu.GDP complex and induces the exchange of GDP to GTP. It remains bound to the aminoacyl-tRNA.EF-Tu.GTP complex up to the GTP hydrolysis stage on the ribosome. This chain is Elongation factor Ts, found in Salmonella agona (strain SL483).